The sequence spans 257 residues: UPF0246 protein RHOS4_29700 (257 aa).

The protein belongs to the UPF0246 family.

In Cereibacter sphaeroides (strain ATCC 17023 / DSM 158 / JCM 6121 / CCUG 31486 / LMG 2827 / NBRC 12203 / NCIMB 8253 / ATH 2.4.1.) (Rhodobacter sphaeroides), this protein is UPF0246 protein RHOS4_29700.